We begin with the raw amino-acid sequence, 350 residues long: DNA polymerase IV (350 aa).

A UmuC domain is found at 5–181; the sequence is IMHYDMDAFY…KKIKIIPGVG (177 aa). Asp9 and Asp99 together coordinate Mg(2+). Glu100 is an active-site residue.

Belongs to the DNA polymerase type-Y family. Monomer. Mg(2+) serves as cofactor.

It is found in the cytoplasm. It catalyses the reaction DNA(n) + a 2'-deoxyribonucleoside 5'-triphosphate = DNA(n+1) + diphosphate. In terms of biological role, poorly processive, error-prone DNA polymerase involved in untargeted mutagenesis. Copies undamaged DNA at stalled replication forks, which arise in vivo from mismatched or misaligned primer ends. These misaligned primers can be extended by PolIV. Exhibits no 3'-5' exonuclease (proofreading) activity. May be involved in translesional synthesis, in conjunction with the beta clamp from PolIII. The protein is DNA polymerase IV of Fusobacterium nucleatum subsp. nucleatum (strain ATCC 25586 / DSM 15643 / BCRC 10681 / CIP 101130 / JCM 8532 / KCTC 2640 / LMG 13131 / VPI 4355).